Reading from the N-terminus, the 67-residue chain is Vespin (67 aa).

Positions 1-21 are cleaved as a signal peptide; it reads MHPIIWELSHMVDLQAAAQKL.

As to expression, expressed by the venom gland.

The protein localises to the secreted. Shows contractile activity on isolated ileum smooth muscle. This chain is Vespin, found in Vespa magnifica (Hornet).